The sequence spans 130 residues: Small ribosomal subunit protein uS8A (130 aa).

This sequence belongs to the universal ribosomal protein uS8 family. As to quaternary structure, component of the small ribosomal subunit (SSU). Mature ribosomes consist of a small (40S) and a large (60S) subunit. The 40S subunit contains about 32 different proteins and 1 molecule of RNA (18S). The 60S subunit contains 45 different proteins and 3 molecules of RNA (25S, 5.8S and 5S).

The protein localises to the cytoplasm. Component of the ribosome, a large ribonucleoprotein complex responsible for the synthesis of proteins in the cell. The small ribosomal subunit (SSU) binds messenger RNAs (mRNAs) and translates the encoded message by selecting cognate aminoacyl-transfer RNA (tRNA) molecules. The large subunit (LSU) contains the ribosomal catalytic site termed the peptidyl transferase center (PTC), which catalyzes the formation of peptide bonds, thereby polymerizing the amino acids delivered by tRNAs into a polypeptide chain. The nascent polypeptides leave the ribosome through a tunnel in the LSU and interact with protein factors that function in enzymatic processing, targeting, and the membrane insertion of nascent chains at the exit of the ribosomal tunnel. This chain is Small ribosomal subunit protein uS8A (RPS22A), found in Candida albicans (strain SC5314 / ATCC MYA-2876) (Yeast).